A 256-amino-acid chain; its full sequence is Late embryogenesis abundant protein 32 (256 aa).

The span at 1–14 (MSQEQPRRPREPVK) shows a compositional bias: basic and acidic residues. The tract at residues 1–20 (MSQEQPRRPREPVKYGDVFE) is disordered. The short motif at 5–9 (QPRRP) is the Nuclear localization signal (NLS) element. 3 SMP domains span residues 13–66 (VKYG…TTNI), 130–187 (ITIG…HNAT), and 195–253 (IKLR…LNER).

The protein belongs to the LEA type SMP family. As to expression, embryo specific, only in dry mature seeds. Expressed at low levels.

Its subcellular location is the cytoplasm. It localises to the nucleus. Functionally, LEA proteins are late embryonic proteins abundant in higher plant seed embryos. The function of those proteins is not known. The sequence is that of Late embryogenesis abundant protein 32 from Arabidopsis thaliana (Mouse-ear cress).